Reading from the N-terminus, the 176-residue chain is DNA repair RAD52-like protein 1, mitochondrial (176 aa).

A mitochondrion-targeting transit peptide spans 1–37 (MAGLGLRLKAAKWTLRSGSGAVSREWSSEMGKGVRRF).

This sequence belongs to the RAD52 family. Interacts with WHY2. As to expression, expressed in root vascular tissue, tips of primary and secondary roots, young leaves, hydathodes, stomatal guard cells, cauline leaves, flower buds, stipules, carpels, pistils and anther filaments.

Its subcellular location is the mitochondrion. It localises to the nucleus. Its function is as follows. Plant-specific single-stranded DNA-binding protein required for efficient heterologous recombination-dependent DNA repair in nuclear and mitochondrial compartments. Forms large nucleo-protein complexes with WHY2 in mitochondria. Binds ssDNA with high affinity, but with little sequence specificity. Involved in double-stranded DNA break repair. Involved in the hydrolytic splicing pathway in mitochondrion. Facilitates the excision of two cis-spliced group II introns, NAD1 intron 2 and NAD2 intron 1. In Arabidopsis thaliana (Mouse-ear cress), this protein is DNA repair RAD52-like protein 1, mitochondrial.